The following is a 265-amino-acid chain: Shikimate dehydrogenase (NADP(+)) (265 aa).

Residues 15 to 17 (SLS) and Thr62 each bind shikimate. The active-site Proton acceptor is the Lys66. Shikimate is bound by residues Asn87 and Asp102. NADP(+)-binding positions include 125 to 129 (GAGGA), 149 to 154 (NRTLEK), and Leu209. Tyr211 serves as a coordination point for shikimate. Gly233 provides a ligand contact to NADP(+).

This sequence belongs to the shikimate dehydrogenase family. In terms of assembly, homodimer.

The catalysed reaction is shikimate + NADP(+) = 3-dehydroshikimate + NADPH + H(+). It functions in the pathway metabolic intermediate biosynthesis; chorismate biosynthesis; chorismate from D-erythrose 4-phosphate and phosphoenolpyruvate: step 4/7. Its function is as follows. Involved in the biosynthesis of the chorismate, which leads to the biosynthesis of aromatic amino acids. Catalyzes the reversible NADPH linked reduction of 3-dehydroshikimate (DHSA) to yield shikimate (SA). The chain is Shikimate dehydrogenase (NADP(+)) from Legionella pneumophila (strain Corby).